The primary structure comprises 703 residues: Stonustoxin subunit alpha (703 aa).

Residues 2-265 (SSDLVMPALG…KAQQLIQEIN (264 aa)) form a structural MACPF/CDC pore-forming domain region. The segment at 266-385 (VSKVRRIHTT…GMVEGTQAKF (120 aa)) is structural FAT domain. Residues 386-517 (VSNQTELDRE…PRMPFVQGYK (132 aa)) form a thioredoxin (THX) domain region. Positions 508–703 (PRMPFVQGYK…AGNHGTLRLL (196 aa)) constitute a B30.2/SPRY domain.

The protein belongs to the SNTX/VTX toxin family. As to quaternary structure, heterodimer of alpha and beta subunits; non-covalently linked. Intrachain disulfide bonds may be present in the heterodimer. In terms of processing, not glycosylated. As to expression, expressed by the venom gland.

The protein localises to the secreted. Its function is as follows. This lethal (towards mammals) heterodimer induces hemolytic activities due to its ability to form pores in the cell membrane. The pore may be composed of 10 SNTX-alpha/beta heterodimers. The toxin elicits potent hypotension which is endothelium-dependent and appears to be mediated by the nitric oxide pathway and activation of potassium channels. In addition, it displays edema-inducing activities, increases vascular permeability. It also shows myotoxic activities and interferes irreversibly with neuromuscular function. It also induces irreversible platelet aggregation in rabbit or rat (but not in human or mouse) whole blood. In addition, it has been observed to increase spontaneous quantal acetylcholine release from isolated frog cutaneous pectoris motor endings. This is Stonustoxin subunit alpha from Synanceia horrida (Estuarine stonefish).